A 64-amino-acid polypeptide reads, in one-letter code: Conotoxin mr5.3 (64 aa).

Residues M1–S19 form the signal peptide. The propeptide occupies V20 to N48. E56 and E60 each carry 4-carboxyglutamate.

Contains 2 disulfide bonds that can be either 'C1-C3, C2-C4' or 'C1-C4, C2-C3', since these disulfide connectivities have been observed for conotoxins with cysteine framework V (for examples, see AC P0DQQ7 and AC P81755). As to expression, expressed by the venom duct.

Its subcellular location is the secreted. This chain is Conotoxin mr5.3, found in Conus marmoreus (Marble cone).